The chain runs to 896 residues: MLKHRMTFILVAIAVIFPFIGYLLSFYTDWLFFAETGFSSVFMTTVYAQTGAGLIFGLLLFAFLQLNLHYANKGSFPLSGIYIVGGGDIRINRNEAGRLVRPVGILISLVLAFLAGNWGAMRWEDLLLFANRVTVGMADPVLGKDVGFYLFSLPFVELLKSFAGFMVLAASVLSAAAYYVKGGITLDDRGAGVDPRVRRHLAVLVGLFGLVVAAGFYLESFSLLLSNNGAFHGAGYVDVHGRLMTLRILTFLTPVAGVVLALGIWRGDWRLALGPPVVIVALYLVGVRVYPGLLQKFKVAPNELTLETPYLENHLKFTRYGYDLDKIETVPFDVDTKLSAADIANNDATIKNIRLWDHAPLLKTYSQLQQIRTYYKFFDVDNDRYMVNGQYSQVMLSPRELSYADLPSKNWINERLIFTHGNGITFGPVSRISKEGLPEFFVKDIPAVSLADIKVTRPEIYYGELSNEYVVVKTKVPEFSYPTATGNINTTYAGKGGVPIDSLLKKALFAAQFKTEKILLSSDITPESRIIYNRNIKERVRTIAPFLSFDVDPYMVVDDGGKLKWIVDAYTFSGRLPYSRPVQGGMNYLRNSVKVVVDAYDGTVSFYVSDAQDVMVKVYSRIFPGLFQPISAMPADLRKHVRYPNQYLQVQAAMFAAYHMTDPKVFYNKENLWQVPTLGEKPMEPYYTIMKLPGEKVEEYILLLPFTPSKRDNLAAWLTARCDGENYGKIRAYTFPRDRLIYGPKQIDARINQDSFISQQLTLWSQRGSEVIRGSLLVIPIEKSLLYVQPLFLAADKAGLPELKRVIVAFGDEVVMEENLELALQRLFGARKSIGTAAAAAAPPGAPAAAGQPASSLAKEAMSIYQRALNLQRQGDWSGYGEELRKLEQVLKRMAQ.

Transmembrane regions (helical) follow at residues 6–26 (MTFILVAIAVIFPFIGYLLSF), 46–66 (VYAQTGAGLIFGLLLFAFLQL), 99–119 (LVRPVGILISLVLAFLAGNWG), 158–180 (LLKSFAGFMVLAASVLSAAAYYV), 201–221 (LAVLVGLFGLVVAAGFYLESF), 245–265 (TLRILTFLTPVAGVVLALGIW), and 271–291 (LALGPPVVIVALYLVGVRVYP).

Belongs to the UPF0182 family.

The protein resides in the cell membrane. The sequence is that of UPF0182 protein GM21_2279 from Geobacter sp. (strain M21).